Consider the following 320-residue polypeptide: Phosphate acetyltransferase (320 aa).

The protein belongs to the phosphate acetyltransferase and butyryltransferase family.

It localises to the cytoplasm. It carries out the reaction acetyl-CoA + phosphate = acetyl phosphate + CoA. The protein operates within metabolic intermediate biosynthesis; acetyl-CoA biosynthesis; acetyl-CoA from acetate: step 2/2. This chain is Phosphate acetyltransferase (pta), found in Mycoplasma genitalium (strain ATCC 33530 / DSM 19775 / NCTC 10195 / G37) (Mycoplasmoides genitalium).